The following is a 621-amino-acid chain: Glucose 1,6-bisphosphate synthase (621 aa).

Residues R73 and S175 each contribute to the alpha-D-glucose 1,6-bisphosphate site. S175 acts as the Phosphoserine intermediate in catalysis. The Mg(2+) site is built by S175, D332, D334, and D336. Position 175 is a phosphoserine (S175). Alpha-D-glucose 1,6-bisphosphate is bound by residues D336, R337, E433, S435, and K447.

It belongs to the phosphohexose mutase family. In terms of tissue distribution, expressed at highest levels in the brain and testis, at intermediate levels in thymus, spleen, lung and skeletal muscle, and at lowest levels in kidney, liver and heart.

The protein resides in the cytoplasm. Its subcellular location is the cytosol. It catalyses the reaction (2R)-3-phospho-glyceroyl phosphate + alpha-D-glucose 1-phosphate = alpha-D-glucose 1,6-bisphosphate + (2R)-3-phosphoglycerate + H(+). It carries out the reaction alpha-D-glucose 6-phosphate + (2R)-3-phospho-glyceroyl phosphate = alpha-D-glucose 1,6-bisphosphate + (2R)-3-phosphoglycerate + H(+). The catalysed reaction is (2R)-3-phospho-glyceroyl phosphate + alpha-D-ribose 1-phosphate = alpha-D-ribose 1,5-bisphosphate + (2R)-3-phosphoglycerate + H(+). The enzyme catalyses 2-deoxy-alpha-D-ribose 1-phosphate + (2R)-3-phospho-glyceroyl phosphate = 2-deoxy-alpha-D-ribose 1,5-bisphosphate + (2R)-3-phosphoglycerate + H(+). It catalyses the reaction (2R)-3-phospho-glyceroyl phosphate + alpha-D-mannose 1-phosphate = alpha-D-mannose 1,6-bisphosphate + (2R)-3-phosphoglycerate + H(+). Its function is as follows. Glucose 1,6-bisphosphate synthase using 1,3-bisphosphoglycerate as a phosphate donor and a series of 1-phosphate sugars, including glucose 1-phosphate, mannose 1-phosphate, ribose 1-phosphate and deoxyribose 1-phosphate, as acceptors. In vitro, also exhibits very low phosphopentomutase and phosphoglucomutase activity which are most probably not physiologically relevant. The sequence is that of Glucose 1,6-bisphosphate synthase from Mus musculus (Mouse).